Reading from the N-terminus, the 430-residue chain is Enolase (430 aa).

A (2R)-2-phosphoglycerate-binding site is contributed by Q166. The Proton donor role is filled by E208. Positions 245, 288, and 315 each coordinate Mg(2+). Residues K340, R369, S370, and K391 each contribute to the (2R)-2-phosphoglycerate site. The active-site Proton acceptor is K340.

This sequence belongs to the enolase family. Mg(2+) serves as cofactor.

Its subcellular location is the cytoplasm. It localises to the secreted. The protein resides in the cell surface. The catalysed reaction is (2R)-2-phosphoglycerate = phosphoenolpyruvate + H2O. The protein operates within carbohydrate degradation; glycolysis; pyruvate from D-glyceraldehyde 3-phosphate: step 4/5. In terms of biological role, catalyzes the reversible conversion of 2-phosphoglycerate (2-PG) into phosphoenolpyruvate (PEP). It is essential for the degradation of carbohydrates via glycolysis. The sequence is that of Enolase from Clostridium beijerinckii (strain ATCC 51743 / NCIMB 8052) (Clostridium acetobutylicum).